The following is a 362-amino-acid chain: MAAWVKGGAADVDAAVEAAADLLAASRVPVLAGLSAEVSALRAAYRLAETLGASLDPVSGPSVYAELGALSAGGAMSTTRAETIGRADVILIVGNRPWDGELIAEIAAAAPSRGRAAGSERALLSLGGPQNGAIRHVAYAADAGGLTISLGHLRAFAKGHLAGEAAFADLAKRLFAAQYGVIVYDPEEVGELGAEMLQGLIRDLNESTRFFALTLADPFQGRAAVQLSAWTTGQAPRVGFGRHQPEHDSWRFDSARQIAAGEADAALWLASLPAPRPAWLGSLPTIAIVGEGSQEAAGETAEVVITVGVPGQSVGGALWNDRRGVIAYAEASDPAKTPAETETAAGVLTRIRDRLIEKGVSC.

In terms of assembly, octaheteromer. Part of the formyltransferase/hydrolase complex fhc; composed of FhcA, FhcB, FhcC and FhcD.

The protein localises to the cytoplasm. The protein operates within one-carbon metabolism; formaldehyde degradation; formate from formaldehyde (H(4)MPT route): step 4/5. Functionally, involved in the transformation of 5-formyl tetrahydromethanopterin (5-formyl-H(4)MPT) to methanofuran (MFR) and formate via the formylmethanofuran (formyl-MFR). In Methylorubrum extorquens (strain ATCC 14718 / DSM 1338 / JCM 2805 / NCIMB 9133 / AM1) (Methylobacterium extorquens), this protein is Formyltransferase/hydrolase complex Fhc subunit B (fhcB).